The primary structure comprises 357 residues: Aminomethyltransferase (357 aa).

Belongs to the GcvT family. As to quaternary structure, the glycine cleavage system is composed of four proteins: P, T, L and H.

It catalyses the reaction N(6)-[(R)-S(8)-aminomethyldihydrolipoyl]-L-lysyl-[protein] + (6S)-5,6,7,8-tetrahydrofolate = N(6)-[(R)-dihydrolipoyl]-L-lysyl-[protein] + (6R)-5,10-methylene-5,6,7,8-tetrahydrofolate + NH4(+). In terms of biological role, the glycine cleavage system catalyzes the degradation of glycine. This chain is Aminomethyltransferase, found in Deinococcus deserti (strain DSM 17065 / CIP 109153 / LMG 22923 / VCD115).